Consider the following 230-residue polypeptide: Translation initiation factor IF-3 (230 aa).

Disordered regions lie at residues Met1–Arg21 and Leu184–Arg230. Low complexity predominate over residues Ala193–Pro208. The span at Ala209–Ala220 shows a compositional bias: pro residues. Residues Pro221–Arg230 are compositionally biased toward low complexity.

Belongs to the IF-3 family. In terms of assembly, monomer.

It localises to the cytoplasm. Its function is as follows. IF-3 binds to the 30S ribosomal subunit and shifts the equilibrium between 70S ribosomes and their 50S and 30S subunits in favor of the free subunits, thus enhancing the availability of 30S subunits on which protein synthesis initiation begins. The sequence is that of Translation initiation factor IF-3 from Anaeromyxobacter dehalogenans (strain 2CP-1 / ATCC BAA-258).